Here is a 225-residue protein sequence, read N- to C-terminus: Viral late gene transcription factor 3 (225 aa).

A zinc finger lies at 7–27; the sequence is CSNCKHNGLITESNHEFCIFC.

Belongs to the nucleo-cytoplasmic large DNA viruses (NCLDVs) VLTF-3 family. As to quaternary structure, interacts with the late transcription elongation factor H5/VLTF-4. Interacts with the late transcription factors VLTF-1.

In terms of biological role, acts with RNA polymerase to initiate transcription from late gene promoters. This Fowlpox virus (strain NVSL) (FPV) protein is Viral late gene transcription factor 3 (VLTF3).